The following is a 459-amino-acid chain: Ribosomal protein uS12 methylthiotransferase RimO (459 aa).

A disordered region spans residues 1 to 28 (MSTNPPDLRPDLAPKARLTQPDRPGQPT). In terms of domain architecture, MTTase N-terminal spans 27 to 137 (PTIGMVSLGC…VLDAVHAAVP (111 aa)). Positions 36, 72, 101, 168, 172, and 175 each coordinate [4Fe-4S] cluster. Residues 154-387 (LTPRHFSYLK…MAKSQDISEA (234 aa)) form the Radical SAM core domain. The region spanning 390–457 (AAKVAQRLEV…EYDLWGRLAP (68 aa)) is the TRAM domain.

It belongs to the methylthiotransferase family. RimO subfamily. [4Fe-4S] cluster serves as cofactor.

The protein resides in the cytoplasm. It catalyses the reaction L-aspartate(89)-[ribosomal protein uS12]-hydrogen + (sulfur carrier)-SH + AH2 + 2 S-adenosyl-L-methionine = 3-methylsulfanyl-L-aspartate(89)-[ribosomal protein uS12]-hydrogen + (sulfur carrier)-H + 5'-deoxyadenosine + L-methionine + A + S-adenosyl-L-homocysteine + 2 H(+). Functionally, catalyzes the methylthiolation of an aspartic acid residue of ribosomal protein uS12. This chain is Ribosomal protein uS12 methylthiotransferase RimO, found in Roseobacter denitrificans (strain ATCC 33942 / OCh 114) (Erythrobacter sp. (strain OCh 114)).